A 397-amino-acid chain; its full sequence is Phosphoglycerate kinase (397 aa).

Substrate is bound by residues 25 to 27 (DLN), arginine 41, 64 to 67 (HLGR), arginine 118, and arginine 151. ATP is bound by residues lysine 202, glutamate 324, and 350-353 (GGDT).

Belongs to the phosphoglycerate kinase family. In terms of assembly, monomer.

The protein localises to the cytoplasm. It carries out the reaction (2R)-3-phosphoglycerate + ATP = (2R)-3-phospho-glyceroyl phosphate + ADP. It participates in carbohydrate degradation; glycolysis; pyruvate from D-glyceraldehyde 3-phosphate: step 2/5. The sequence is that of Phosphoglycerate kinase from Paracidovorax citrulli (strain AAC00-1) (Acidovorax citrulli).